A 467-amino-acid polypeptide reads, in one-letter code: Glutamate--tRNA ligase (467 aa).

The 'HIGH' region signature appears at 13–23 (PSPTGFLHLGG). A compositionally biased stretch (basic and acidic residues) spans 118–133 (ARGDKPRYDGTWRPEP). Residues 118–141 (ARGDKPRYDGTWRPEPGKTLPAIP) are disordered. Positions 245 to 249 (KLSKR) match the 'KMSKS' region motif. Lys248 serves as a coordination point for ATP.

It belongs to the class-I aminoacyl-tRNA synthetase family. Glutamate--tRNA ligase type 1 subfamily. In terms of assembly, monomer.

Its subcellular location is the cytoplasm. The catalysed reaction is tRNA(Glu) + L-glutamate + ATP = L-glutamyl-tRNA(Glu) + AMP + diphosphate. Functionally, catalyzes the attachment of glutamate to tRNA(Glu) in a two-step reaction: glutamate is first activated by ATP to form Glu-AMP and then transferred to the acceptor end of tRNA(Glu). This chain is Glutamate--tRNA ligase, found in Bordetella avium (strain 197N).